We begin with the raw amino-acid sequence, 338 residues long: Cytochrome f (338 aa).

An N-terminal signal peptide occupies residues 1-45 (MNFKVCSFPSRRQSIAAFVRVLMVILLTLGALVSSDVLLPQPAAA). Residues tyrosine 46, cysteine 66, cysteine 69, and histidine 70 each contribute to the heme site. The chain crosses the membrane as a helical span at residues 300-316 (IAFLAAITLTQILLVLK).

Belongs to the cytochrome f family. The 4 large subunits of the cytochrome b6-f complex are cytochrome b6, subunit IV (17 kDa polypeptide, PetD), cytochrome f and the Rieske protein, while the 4 small subunits are PetG, PetL, PetM and PetN. The complex functions as a dimer. Heme serves as cofactor.

It is found in the cellular thylakoid membrane. In terms of biological role, component of the cytochrome b6-f complex, which mediates electron transfer between photosystem II (PSII) and photosystem I (PSI), cyclic electron flow around PSI, and state transitions. This Leptolyngbya laminosa (Phormidium laminosum) protein is Cytochrome f (petA).